A 199-amino-acid chain; its full sequence is Urease accessory protein UreG (199 aa).

8–15 (GPVGSGKT) is a GTP binding site.

This sequence belongs to the SIMIBI class G3E GTPase family. UreG subfamily. As to quaternary structure, homodimer. UreH, UreF and UreG form a complex that acts as a GTP-hydrolysis-dependent molecular chaperone, activating the urease apoprotein by helping to assemble the nickel containing metallocenter of UreC. The UreE protein probably delivers the nickel.

The protein localises to the cytoplasm. Functionally, facilitates the functional incorporation of the urease nickel metallocenter. This process requires GTP hydrolysis, probably effectuated by UreG. The protein is Urease accessory protein UreG of Helicobacter pylori (strain G27).